Reading from the N-terminus, the 539-residue chain is Alpha-copaene synthase (539 aa).

Mg(2+)-binding residues include aspartate 290 and aspartate 294. Residues aspartate 290, aspartate 294, and arginine 432 each coordinate substrate. The short motif at 290-294 (DDTFD) is the DDXXD motif element.

It belongs to the terpene synthase family. Monomer. The cofactor is Mg(2+). Requires Mn(2+) as cofactor.

Its subcellular location is the cytoplasm. The catalysed reaction is (2E,6E)-farnesyl diphosphate = alpha-copaene + diphosphate. The enzyme catalyses (2E,6E)-farnesyl diphosphate = (+)-germacrene D + diphosphate. It carries out the reaction (2E,6E)-farnesyl diphosphate = (-)-(E)-beta-caryophyllene + diphosphate. It catalyses the reaction (2E,6E)-farnesyl diphosphate = delta-cadinene + diphosphate. Its pathway is secondary metabolite biosynthesis; terpenoid biosynthesis. In terms of biological role, converts farnesyl diphosphate to the bicyclic olefins alpha-copaene, (E)-beta-caryophyllene, and to the macrocyclic sesquiterpene germacrene D. Also mediates the biosynthesis of minor sesquiterpene hydrocarbons including delta-cadinene. Involved in indirect defense by producing volatile signals attracting natural enemies of herbivores. This Zea mays (Maize) protein is Alpha-copaene synthase.